We begin with the raw amino-acid sequence, 203 residues long: Sec-independent protein translocase protein TatB (203 aa).

A helical membrane pass occupies residues 1–21 (MFDIGWTELLVIAVVLIVVVG). The disordered stretch occupies residues 179–203 (KPKRTTAVRKPATLKKPAQTKKDEA).

This sequence belongs to the TatB family. As to quaternary structure, the Tat system comprises two distinct complexes: a TatABC complex, containing multiple copies of TatA, TatB and TatC subunits, and a separate TatA complex, containing only TatA subunits. Substrates initially bind to the TatABC complex, which probably triggers association of the separate TatA complex to form the active translocon.

The protein localises to the cell inner membrane. Part of the twin-arginine translocation (Tat) system that transports large folded proteins containing a characteristic twin-arginine motif in their signal peptide across membranes. Together with TatC, TatB is part of a receptor directly interacting with Tat signal peptides. TatB may form an oligomeric binding site that transiently accommodates folded Tat precursor proteins before their translocation. The polypeptide is Sec-independent protein translocase protein TatB (Rhizobium johnstonii (strain DSM 114642 / LMG 32736 / 3841) (Rhizobium leguminosarum bv. viciae)).